The following is a 940-amino-acid chain: Serine/threonine-protein kinase PLK4 (940 aa).

The 254-residue stretch at 12–265 (FKVLTLLGKG…LSAVLDHPFM (254 aa)) folds into the Protein kinase domain. ATP contacts are provided by residues 18–26 (LGKGSFACV) and K41. D136 (proton acceptor) is an active-site residue. Disordered regions lie at residues 262 to 353 (HPFM…DLSR) and 409 to 529 (RLFP…DAFV). Positions 273 to 305 (SKDSGSSNGGSIDSGIATISTASNATNNSSSSR) are enriched in low complexity. Composition is skewed to polar residues over residues 337 to 349 (FKSG…NSQD), 440 to 465 (NPAS…QPWF), and 494 to 519 (GTQT…QHNN). In terms of domain architecture, Cryptic POLO box 1 (CPB1) spans 563–676 (CLKKSFPPLC…TKFVQLVKSK (114 aa)). In terms of domain architecture, Cryptic POLO box 2 (CPB2) spans 677-791 (TPKVTLYTKF…GRRPVNPVPP (115 aa)). The POLO box domain occupies 857–935 (KVLKSIFVPN…LSSILGLLAN (79 aa)).

The protein belongs to the protein kinase superfamily. Ser/Thr protein kinase family. CDC5/Polo subfamily. As to quaternary structure, homodimer. In terms of processing, ubiquitinated; leading to its degradation by the proteasome.

The protein localises to the cytoplasm. The protein resides in the cytoskeleton. It is found in the microtubule organizing center. Its subcellular location is the centrosome. It localises to the centriole. The enzyme catalyses L-seryl-[protein] + ATP = O-phospho-L-seryl-[protein] + ADP + H(+). It catalyses the reaction L-threonyl-[protein] + ATP = O-phospho-L-threonyl-[protein] + ADP + H(+). Its function is as follows. Serine/threonine-protein kinase that plays a central role in centriole duplication. Able to trigger procentriole formation on the surface of the parental centriole cylinder, leading to the recruitment of centriole biogenesis proteins such as sass6, cpap, ccp110, cep135 and gamma-tubulin. When overexpressed, it is able to induce centrosome amplification through the simultaneous generation of multiple procentrioles adjoining each parental centriole during S phase. Its central role in centriole replication suggests a possible role in tumorigenesis, centrosome aberrations being frequently observed in tumors. Also involved in deuterosome-mediated centriole amplification in multiciliated that can generate more than 100 centrioles. The chain is Serine/threonine-protein kinase PLK4 from Danio rerio (Zebrafish).